The following is an 87-amino-acid chain: NAD(P)H-quinone oxidoreductase subunit O (87 aa).

A compositionally biased stretch (basic and acidic residues) spans 1 to 10 (MSEQTGKVDD). The tract at residues 1-26 (MSEQTGKVDDSQSPPKVQKKLRKGDL) is disordered.

The protein belongs to the complex I NdhO subunit family. As to quaternary structure, NDH-1 can be composed of about 15 different subunits; different subcomplexes with different compositions have been identified which probably have different functions.

It localises to the cellular thylakoid membrane. It carries out the reaction a plastoquinone + NADH + (n+1) H(+)(in) = a plastoquinol + NAD(+) + n H(+)(out). It catalyses the reaction a plastoquinone + NADPH + (n+1) H(+)(in) = a plastoquinol + NADP(+) + n H(+)(out). In terms of biological role, NDH-1 shuttles electrons from an unknown electron donor, via FMN and iron-sulfur (Fe-S) centers, to quinones in the respiratory and/or the photosynthetic chain. The immediate electron acceptor for the enzyme in this species is believed to be plastoquinone. Couples the redox reaction to proton translocation, and thus conserves the redox energy in a proton gradient. Cyanobacterial NDH-1 also plays a role in inorganic carbon-concentration. The protein is NAD(P)H-quinone oxidoreductase subunit O of Prochlorococcus marinus (strain NATL1A).